A 207-amino-acid chain; its full sequence is Small ribosomal subunit protein uS4 (207 aa).

Positions 32–55 (CKLDSKPGQHGRTSGARTSDYGTQ) are disordered. Over residues 42–53 (GRTSGARTSDYG) the composition is skewed to polar residues. Residues 97–158 (SRLDNVVYRM…TKKKQARILE (62 aa)) form the S4 RNA-binding domain.

This sequence belongs to the universal ribosomal protein uS4 family. As to quaternary structure, part of the 30S ribosomal subunit. Contacts protein S5. The interaction surface between S4 and S5 is involved in control of translational fidelity.

In terms of biological role, one of the primary rRNA binding proteins, it binds directly to 16S rRNA where it nucleates assembly of the body of the 30S subunit. With S5 and S12 plays an important role in translational accuracy. In Paraburkholderia phytofirmans (strain DSM 17436 / LMG 22146 / PsJN) (Burkholderia phytofirmans), this protein is Small ribosomal subunit protein uS4.